The primary structure comprises 971 residues: MNMNQYYDLDNGKNVMFMNDASSTSGYSSSTSPNSTNRSFSPAHSPKTMELQTDFANLNLPGGNSPHQPPMANSPYQNQLLNNGGICQLGATNLINSTGVSFGVANVTSFGNMYMDHQYFVPAPATVPPSQNFGYHQNGLASDGDIKHVPQLRIVEQPVEKFRFRYKSEMHGTHGSLNGANSKRTPKTFPEVTLCNYDGPAVIRCSLFQTNLDSPHSHQLVVRKDDRDVCDPHDLHVSKERGYVAQFINMGIIHTAKKYIFEELCKKKQDRLVFQMNRRELSHKQLQELHQETEREAKDMNLNQVRLCFEAFKIEDNGAWVPLAPPVYSNAINNRKSAQTGELRIVRLSKPTGGVMGNDELILLVEKVSKKNIKVRFFEEDEDGETVWEAYAKFRESDVHHQYAIVCQTPPYKDKDVDREVNVYIELIRPSDDERSFPALPFRYKPRSVIVSRKRRRTGSSANSSSSGTESSNNSLDLPKTLGLAQPPNGLPNLSQHDQTISEEFGREKHLNEFIASEDFRKLIEHNSSDLEKICQLDMGELQHDGHNRAEVPSHRNRTIKCLDDLFEIYKQDRISPIKISHHKVEKWFIEHALNNYNRDTLLHEVISHKKDKLKLAIQTIQVMNYFNLKDVVNSTLNADGDSALHVACQQDRAHYIRPLLGMGCNPNLKNNAGNTPLHVAVKEEHLSCVESFLNGVPTVQLDLSLTNDDGLTPLHMAIRQNKYDVAKKLISYDRTSISVANTMDGNNALHMAVLEQSVELLVLILDAQNENLTDILQAQNAAGHTPLELAERKANDRVVQLLKNVYPEKGELAMTWIPCKVKEEIDSSSDESSDAGQLEIKSEEMDIETKDEDSVELDLSSGPRRQKDESSRDTEMDNNKLQLLLKNKFIYDRLCSLLNQPLGHGSDPQDRKWMQLARQTHLKQFAFIWLGAEDLLDHVKRKGASVEFSTFARALQAVDPQAYALLVNPT.

The segment covering 23–41 (STSGYSSSTSPNSTNRSFS) has biased composition (low complexity). The interval 23-46 (STSGYSSSTSPNSTNRSFSPAHSP) is disordered. The RHD domain occupies 147–339 (KHVPQLRIVE…NAINNRKSAQ (193 aa)). S431 is subject to Phosphoserine; by PKA. The Nuclear localization signal motif lies at 452–457 (SRKRRR). The segment at 453-496 (RKRRRTGSSANSSSSGTESSNNSLDLPKTLGLAQPPNGLPNLSQ) is disordered. The segment covering 460–475 (SSANSSSSGTESSNNS) has biased composition (low complexity). T620 is modified (phosphothreonine). Y626 is modified (phosphotyrosine). ANK repeat units follow at residues 640-669 (DGDS…NPNL), 673-702 (AGNT…TVQL), 710-740 (DGLT…SISV), 745-775 (DGNN…NLTD), and 783-812 (AGHT…EKGE). Residues 826-877 (IDSSSDESSDAGQLEIKSEEMDIETKDEDSVELDLSSGPRRQKDESSRDTEM) form a disordered region. The span at 866–877 (RQKDESSRDTEM) shows a compositional bias: basic and acidic residues. At S950 the chain carries Phosphoserine.

Rel-p68 subunit interacts with Dredd. Interacts with DMAP1. Interacts with akirin; interaction is immune stimulation-dependent; activates selected rel target gene promoters. Post-translationally, phosphorylated by lipopolysaccharide (LPS)-activated I-kappa-B kinase complex before being cleaved. Rel-p110 subunit is cleaved within seconds of an immune challenge into Rel-p49 subunit and Rel-p68 subunit. Rel-p110 subunit reappears after 45 minutes.

Its subcellular location is the nucleus. The protein resides in the cytoplasm. Transcription factor that plays a key role in the humoral immune response as part of the peptidoglycan recognition protein (IMD) signaling pathway. Rel-p68 subunit translocates to the nucleus where it binds to the promoter of the Cecropin A1 gene and probably other antimicrobial peptide genes. I-kappa-B kinase complex (IKKbeta and key) and PGRP-LC are essential signaling components in transmitting the lipopolysaccharide (LPS) signal leading to cact degradation for NF-kappa-B (rel) activation. Part of a Toll-related receptor pathway that functions in the apoptosis of unfit cells during cell competition. Also part of some antiviral immunity: activated downstream of Sting signaling, which detects double-stranded RNA (dsRNA) from viruses, and promotes expression of antiviral effector genes. May be part of a NF-kappa-B and Tollo signaling cascade that regulates development of the peripheral nervous system. Possibly post-transcriptionally regulates the neuron-specific genes sc and ase, by promoting the rapid turnover of their transcripts in the wing imaginal disk. This Drosophila melanogaster (Fruit fly) protein is Nuclear factor NF-kappa-B p110 subunit.